We begin with the raw amino-acid sequence, 308 residues long: D-alanine--D-alanine ligase (308 aa).

Residues Lys-104–Glu-301 form the ATP-grasp domain. ATP is bound at residue Ile-130–Thr-185. 3 residues coordinate Mg(2+): Asp-255, Glu-268, and Asn-270.

It belongs to the D-alanine--D-alanine ligase family. The cofactor is Mg(2+). Requires Mn(2+) as cofactor.

It localises to the cytoplasm. The enzyme catalyses 2 D-alanine + ATP = D-alanyl-D-alanine + ADP + phosphate + H(+). Its pathway is cell wall biogenesis; peptidoglycan biosynthesis. In terms of biological role, cell wall formation. The sequence is that of D-alanine--D-alanine ligase from Acinetobacter baumannii (strain ACICU).